The chain runs to 262 residues: Expansin-A13 (262 aa).

An N-terminal signal peptide occupies residues 1 to 22 (MAGVARMLAAVVCAIMPAAAMA). The Expansin-like EG45 domain maps to 52–167 (GGACGYGNLY…QRVPCMKKGG (116 aa)). In terms of domain architecture, Expansin-like CBD spans 177–257 (YFQLVLLTNV…GWRFGQTFAS (81 aa)).

Belongs to the expansin family. Expansin A subfamily. In terms of tissue distribution, expressed in roots and flowers.

Its subcellular location is the secreted. The protein resides in the cell wall. The protein localises to the membrane. Its function is as follows. May cause loosening and extension of plant cell walls by disrupting non-covalent bonding between cellulose microfibrils and matrix glucans. No enzymatic activity has been found. May be required for rapid internodal elongation in deepwater rice during submergence. The chain is Expansin-A13 (EXPA13) from Oryza sativa subsp. japonica (Rice).